The primary structure comprises 429 residues: Putative zinc metalloprotease aq_1964 (429 aa).

Residue histidine 17 coordinates Zn(2+). Glutamate 18 is a catalytic residue. Residue histidine 21 participates in Zn(2+) binding. The helical transmembrane segment at isoleucine 88–tyrosine 110 threads the bilayer. The 77-residue stretch at threonine 189 to glycine 265 folds into the PDZ domain. The next 2 membrane-spanning stretches (helical) occupy residues isoleucine 369–leucine 391 and arginine 406–leucine 428.

It belongs to the peptidase M50B family. Zn(2+) is required as a cofactor.

It is found in the cell inner membrane. This is Putative zinc metalloprotease aq_1964 from Aquifex aeolicus (strain VF5).